A 648-amino-acid polypeptide reads, in one-letter code: Macrolide export ATP-binding/permease protein MacB (648 aa).

Residues Leu5–Thr243 form the ABC transporter domain. Gly41–Ser48 contributes to the ATP binding site. Helical transmembrane passes span Leu273 to Gly293, Ala417 to Ala437, Leu523 to Ile543, Val577 to Met597, and Leu611 to Leu631.

It belongs to the ABC transporter superfamily. Macrolide exporter (TC 3.A.1.122) family. Homodimer. Part of the tripartite efflux system MacAB-TolC, which is composed of an inner membrane transporter, MacB, a periplasmic membrane fusion protein, MacA, and an outer membrane component, TolC. The complex forms a large protein conduit and can translocate molecules across both the inner and outer membranes. Interacts with MacA.

It localises to the cell inner membrane. Its function is as follows. Part of the tripartite efflux system MacAB-TolC. MacB is a non-canonical ABC transporter that contains transmembrane domains (TMD), which form a pore in the inner membrane, and an ATP-binding domain (NBD), which is responsible for energy generation. Confers resistance against macrolides. The sequence is that of Macrolide export ATP-binding/permease protein MacB from Salmonella choleraesuis (strain SC-B67).